A 148-amino-acid polypeptide reads, in one-letter code: Large ribosomal subunit protein uL15 (148 aa).

Basic residues predominate over residues 1-30 (MTHSKRNTRKLRGHVSHGHGRVGKHRKHPG). Residues 1–38 (MTHSKRNTRKLRGHVSHGHGRVGKHRKHPGGRGMAGPE) are disordered.

The protein belongs to the universal ribosomal protein uL15 family.

The polypeptide is Large ribosomal subunit protein uL15 (RPL27A) (Euplotes crassus).